The primary structure comprises 177 residues: Acetyltransferase (177 aa).

The N-acetyltransferase domain maps to 4–174 (AQLRRVTAES…PTAIYFKTLG (171 aa)). Acetyl-CoA contacts are provided by residues Glu27, 96-98 (LMV), 104-109 (GRGLGR), 130-131 (DT), and Tyr141.

Functionally, renders tabtoxin-producing pathogens tolerant to their own phytotoxins. The polypeptide is Acetyltransferase (ttr) (Pseudomonas amygdali pv. tabaci (Pseudomonas syringae pv. tabaci)).